We begin with the raw amino-acid sequence, 167 residues long: Phosphorelay intermediate protein YPD1 (167 aa).

The 106-residue stretch at 24 to 129 (DSDFSKGLII…DDEEIKIQVD (106 aa)) folds into the HPt domain. H64 is subject to Phosphohistidine.

This sequence belongs to the YPD1 family. Interacts with the response regulatory domains of SLN1 and SSK1. The phosphorelay mechanism involves the sequential transfer of a phosphate group from 'His-576' (H1) to 'Asp-1144' (D1) of SLN1, then to His-64 (H2) of YPD1 and finally to 'Asp-554' (D2) of SSK1 or 'Asp-427' (D2) of SKN7.

Its subcellular location is the cytoplasm. It localises to the nucleus. Phosphorelay intermediate protein that is part of the branched SLN1-YPD1-SKN7/SSK1 two-component regulatory system, which controls activity of the HOG1 pathway and gene expression in response to changes in the osmolarity of the extracellular environment. Catalyzes the phosphoryl group transfer from the membrane-bound osmosensing histidine kinase SLN1 to two distinct response regulator proteins, SSK1 in the cytoplasm, and transcription factor SKN7 in the nucleus. This Saccharomyces cerevisiae (strain ATCC 204508 / S288c) (Baker's yeast) protein is Phosphorelay intermediate protein YPD1 (YPD1).